The primary structure comprises 313 residues: MAIATPTSAAPTPAPAGFTGTLTDKLREQFAEGLDGQTLRPDFTMEQPVHRYTAADHATWRTLYDRQEALLPGRACDEFLQGLSTLGMSREGVPSFDRLNETLMRATGWQIVAVPGLVPDEVFFEHLANRRFPASWWMRRPDQLDYLQEPDGFHDIFGHVPLLINPVFADYMQAYGQGGLKAARLGALDMLARLYWYTVEFGLIRTPAGLRIYGAGIVSSKSESVYALDSASPNRIGFDVHRIMRTRYRIDTFQKTYFVIDSFEQLFDATRPDFTPLYEALGTLPTFGAGDVVDGDAVLNAGTREGWADTADI.

Positions 154, 159, and 200 each coordinate Fe cation.

The protein belongs to the biopterin-dependent aromatic amino acid hydroxylase family. The cofactor is Fe(2+).

It catalyses the reaction (6R)-L-erythro-5,6,7,8-tetrahydrobiopterin + L-phenylalanine + O2 = (4aS,6R)-4a-hydroxy-L-erythro-5,6,7,8-tetrahydrobiopterin + L-tyrosine. It functions in the pathway amino-acid degradation; L-phenylalanine degradation; acetoacetate and fumarate from L-phenylalanine: step 1/6. In Ralstonia nicotianae (strain ATCC BAA-1114 / GMI1000) (Ralstonia solanacearum), this protein is Phenylalanine-4-hydroxylase (phhA).